The following is a 343-amino-acid chain: Aspartate-semialdehyde dehydrogenase (343 aa).

Residue 11–14 participates in NADP(+) binding; sequence TGMV. R109 is a binding site for phosphate. Residue C148 is the Acyl-thioester intermediate of the active site. Q174 is a substrate binding site. Position 177 to 178 (177 to 178) interacts with NADP(+); sequence SG. E200 is a binding site for substrate. A phosphate-binding site is contributed by K203. Residue R233 participates in substrate binding. Catalysis depends on H240, which acts as the Proton acceptor. An NADP(+)-binding site is contributed by 321-322; sequence NT.

The protein belongs to the aspartate-semialdehyde dehydrogenase family. As to quaternary structure, homodimer.

It catalyses the reaction L-aspartate 4-semialdehyde + phosphate + NADP(+) = 4-phospho-L-aspartate + NADPH + H(+). It functions in the pathway amino-acid biosynthesis; L-lysine biosynthesis via DAP pathway; (S)-tetrahydrodipicolinate from L-aspartate: step 2/4. It participates in amino-acid biosynthesis; L-methionine biosynthesis via de novo pathway; L-homoserine from L-aspartate: step 2/3. The protein operates within amino-acid biosynthesis; L-threonine biosynthesis; L-threonine from L-aspartate: step 2/5. In terms of biological role, catalyzes the NADPH-dependent formation of L-aspartate-semialdehyde (L-ASA) by the reductive dephosphorylation of L-aspartyl-4-phosphate. The chain is Aspartate-semialdehyde dehydrogenase from Archaeoglobus fulgidus (strain ATCC 49558 / DSM 4304 / JCM 9628 / NBRC 100126 / VC-16).